Consider the following 359-residue polypeptide: Probable dual-specificity RNA methyltransferase RlmN (359 aa).

The Proton acceptor role is filled by Glu99. Positions 105–342 (TENRRTACVS…VTIRKSYGTT (238 aa)) constitute a Radical SAM core domain. Cys112 and Cys347 are oxidised to a cystine. Residues Cys119, Cys123, and Cys126 each coordinate [4Fe-4S] cluster. Residues 171–172 (GE), Ser204, 227–229 (SLH), and Asn304 each bind S-adenosyl-L-methionine. The active-site S-methylcysteine intermediate is the Cys347.

It belongs to the radical SAM superfamily. RlmN family. The cofactor is [4Fe-4S] cluster.

The protein localises to the cytoplasm. The catalysed reaction is adenosine(2503) in 23S rRNA + 2 reduced [2Fe-2S]-[ferredoxin] + 2 S-adenosyl-L-methionine = 2-methyladenosine(2503) in 23S rRNA + 5'-deoxyadenosine + L-methionine + 2 oxidized [2Fe-2S]-[ferredoxin] + S-adenosyl-L-homocysteine. It catalyses the reaction adenosine(37) in tRNA + 2 reduced [2Fe-2S]-[ferredoxin] + 2 S-adenosyl-L-methionine = 2-methyladenosine(37) in tRNA + 5'-deoxyadenosine + L-methionine + 2 oxidized [2Fe-2S]-[ferredoxin] + S-adenosyl-L-homocysteine. In terms of biological role, specifically methylates position 2 of adenine 2503 in 23S rRNA and position 2 of adenine 37 in tRNAs. This Pelodictyon phaeoclathratiforme (strain DSM 5477 / BU-1) protein is Probable dual-specificity RNA methyltransferase RlmN.